Consider the following 529-residue polypeptide: uncharacterized protein (529 aa).

Basic and acidic residues predominate over residues 1-11 (MSSSKIKELRE). Disordered regions lie at residues 1–222 (MSSS…IPYS), 237–256 (PFLE…EENV), 271–372 (AFLQ…TAAP), and 393–488 (GSGN…PSFT). Over residues 27-40 (MQQNQPRPATTTPP) the composition is skewed to polar residues. The span at 83-95 (TKGRAHPRSRRPP) shows a compositional bias: basic residues. A compositionally biased stretch (polar residues) spans 110–125 (NTGSTKAADTKSSVEA). Ser128 is subject to Phosphoserine. The span at 170–199 (TTKAVEATTSKASSAHTDTLATSASNSDRG) shows a compositional bias: polar residues. Residue Ser217 is modified to Phosphoserine. The segment covering 237 to 249 (PFLESKVLPQNNE) has biased composition (polar residues). The span at 321-334 (SSPLSFSASKSPAA) shows a compositional bias: low complexity. Over residues 336-362 (DSSTKTPTEQVNVVSKQAPTTSSTSVI) the composition is skewed to polar residues. A compositionally biased stretch (basic and acidic residues) spans 409–426 (ERTKSLSKESPVEPEKPA). Residues 430–455 (ATSSSTPTTENKESWTNQGIKSSQQR) show a composition bias toward polar residues. The span at 456-470 (SANASPATSPSNQAS) shows a compositional bias: low complexity. Residues 471–488 (IHASFTKESSTHSSPSFT) are compositionally biased toward polar residues.

Its subcellular location is the cytoplasm. This is an uncharacterized protein from Schizosaccharomyces pombe (strain 972 / ATCC 24843) (Fission yeast).